A 473-amino-acid chain; its full sequence is Argininosuccinate lyase (473 aa).

The residue at position 2 (Ala-2) is an N-acetylalanine. At Lys-7 the chain carries N6-acetyllysine. Ser-27 contacts 2-(N(omega)-L-arginino)succinate. The residue at position 69 (Lys-69) is an N6-acetyllysine. 2 residues coordinate 2-(N(omega)-L-arginino)succinate: Asn-114 and Thr-159. The active-site Proton acceptor is the His-160. Catalysis depends on Ser-281, which acts as the Proton donor. N6-acetyllysine is present on Lys-288. 2-(N(omega)-L-arginino)succinate contacts are provided by Asn-289, Tyr-321, Gln-326, and Lys-329.

The protein belongs to the lyase 1 family. Argininosuccinate lyase subfamily. In terms of assembly, homotetramer. Forms tissue-specific complexes with ASS1, SLC7A1, HSP90AA1 and nitric oxide synthase NOS1, NOS2 or NOS3; the complex maintenance is independent of ASL catalytic function. Acetylation modifies enzyme activity in response to alterations of extracellular nutrient availability. Acetylation increased with trichostin A (TSA) or with nicotinamide (NAM). Glucose increases acetylation by about a factor of 3 with decreasing enzyme activity. Acetylation on Lys-288 is decreased on the addition of extra amino acids resulting in activation of enzyme activity.

It carries out the reaction 2-(N(omega)-L-arginino)succinate = fumarate + L-arginine. The protein operates within amino-acid biosynthesis; L-arginine biosynthesis; L-arginine from L-ornithine and carbamoyl phosphate: step 3/3. Its pathway is nitrogen metabolism; urea cycle; L-arginine and fumarate from (N(omega)-L-arginino)succinate: step 1/1. With respect to regulation, enzyme activity is regulated by acetylation. Catalyzes the reversible cleavage of L-argininosuccinate to fumarate and L-arginine, an intermediate step reaction in the urea cycle mostly providing for hepatic nitrogen detoxification into excretable urea as well as de novo L-arginine synthesis in nonhepatic tissues. Essential regulator of intracellular and extracellular L-arginine pools. As part of citrulline-nitric oxide cycle, forms tissue-specific multiprotein complexes with argininosuccinate synthase ASS1, transport protein SLC7A1 and nitric oxide synthase NOS1, NOS2 or NOS3, allowing for cell-autonomous L-arginine synthesis while channeling extracellular L-arginine to nitric oxide synthesis pathway. This is Argininosuccinate lyase (ASL) from Bos taurus (Bovine).